The primary structure comprises 438 residues: Acid phosphatase type 7 (438 aa).

The N-terminal stretch at 1–26 (MHPLPGYWSCYCLLLLFSLGVQGSLG) is a signal peptide. 3 residues coordinate Fe cation: Asp141, Asp170, and Tyr173. Asp170 serves as a coordination point for Zn(2+). Asn205 provides a ligand contact to Zn(2+). The N-linked (GlcNAc...) asparagine glycan is linked to Asn211. The Zn(2+) site is built by His286 and His333. His335 contributes to the Fe cation binding site. N-linked (GlcNAc...) asparagine glycosylation is found at Asn350 and Asn404.

The protein belongs to the metallophosphoesterase superfamily. Purple acid phosphatase family. It depends on Fe cation as a cofactor. Zn(2+) is required as a cofactor.

The protein localises to the secreted. It catalyses the reaction a phosphate monoester + H2O = an alcohol + phosphate. The protein is Acid phosphatase type 7 of Homo sapiens (Human).